Reading from the N-terminus, the 300-residue chain is Recombination-promoting nuclease RpnC (300 aa).

It belongs to the Rpn/YhgA-like nuclease family.

Functionally, a low activity DNA endonuclease yielding 3'-hydroxyl ends. Upon expression enhances RecA-independent DNA recombination 2.9-fold, concomitantly reducing viability by 59% and inducing DNA damage as measured by induction of the SOS repair response. The protein is Recombination-promoting nuclease RpnC of Escherichia coli (strain K12).